We begin with the raw amino-acid sequence, 431 residues long: Probable indole-3-pyruvate monooxygenase YUCCA7 (431 aa).

G36 to G41 contacts FAD. G207–G212 contributes to the NADP(+) binding site.

It belongs to the FMO family. FAD is required as a cofactor. As to expression, expressed in shoot apex regions and siliques, and at high levels in roots. Detected in flowers, stems and leaves.

The catalysed reaction is indole-3-pyruvate + NADPH + O2 + H(+) = (indol-3-yl)acetate + CO2 + NADP(+) + H2O. The protein operates within plant hormone metabolism; auxin biosynthesis. Involved in auxin biosynthesis. Belongs to the set of redundant YUCCA genes probably responsible for auxin biosynthesis in roots. The sequence is that of Probable indole-3-pyruvate monooxygenase YUCCA7 (YUC7) from Arabidopsis thaliana (Mouse-ear cress).